A 389-amino-acid polypeptide reads, in one-letter code: Phosphopentomutase (389 aa).

D12, D284, H289, D325, H326, and H337 together coordinate Mn(2+).

Belongs to the phosphopentomutase family. Requires Mn(2+) as cofactor.

It is found in the cytoplasm. It carries out the reaction 2-deoxy-alpha-D-ribose 1-phosphate = 2-deoxy-D-ribose 5-phosphate. It catalyses the reaction alpha-D-ribose 1-phosphate = D-ribose 5-phosphate. It participates in carbohydrate degradation; 2-deoxy-D-ribose 1-phosphate degradation; D-glyceraldehyde 3-phosphate and acetaldehyde from 2-deoxy-alpha-D-ribose 1-phosphate: step 1/2. Functionally, isomerase that catalyzes the conversion of deoxy-ribose 1-phosphate (dRib-1-P) and ribose 1-phosphate (Rib-1-P) to deoxy-ribose 5-phosphate (dRib-5-P) and ribose 5-phosphate (Rib-5-P), respectively. This is Phosphopentomutase from Anaeromyxobacter sp. (strain Fw109-5).